Reading from the N-terminus, the 177-residue chain is Dihydrofolate reductase (177 aa).

The enzyme catalyses (6S)-5,6,7,8-tetrahydrofolate + NADP(+) = 7,8-dihydrofolate + NADPH + H(+). Its function is as follows. Provides the tetrahydrofolates necessary for the synthesis of nucleotides and amino acids. Bacteriophage T5 induces high levels of dihydrofolate reductase in the host cell, probably for the viral replication. The protein is Dihydrofolate reductase of Escherichia phage T5 (Enterobacteria phage T5).